Consider the following 459-residue polypeptide: ATP synthase subunit beta (459 aa).

Residue 148-155 (GGAGVGKT) coordinates ATP.

This sequence belongs to the ATPase alpha/beta chains family. As to quaternary structure, F-type ATPases have 2 components, CF(1) - the catalytic core - and CF(0) - the membrane proton channel. CF(1) has five subunits: alpha(3), beta(3), gamma(1), delta(1), epsilon(1). CF(0) has three main subunits: a(1), b(2) and c(9-12). The alpha and beta chains form an alternating ring which encloses part of the gamma chain. CF(1) is attached to CF(0) by a central stalk formed by the gamma and epsilon chains, while a peripheral stalk is formed by the delta and b chains.

The protein localises to the cell inner membrane. The catalysed reaction is ATP + H2O + 4 H(+)(in) = ADP + phosphate + 5 H(+)(out). Functionally, produces ATP from ADP in the presence of a proton gradient across the membrane. The catalytic sites are hosted primarily by the beta subunits. This chain is ATP synthase subunit beta, found in Vesicomyosocius okutanii subsp. Calyptogena okutanii (strain HA).